The chain runs to 201 residues: Protein GrpE (201 aa).

The protein belongs to the GrpE family. In terms of assembly, homodimer.

It is found in the cytoplasm. In terms of biological role, participates actively in the response to hyperosmotic and heat shock by preventing the aggregation of stress-denatured proteins, in association with DnaK and GrpE. It is the nucleotide exchange factor for DnaK and may function as a thermosensor. Unfolded proteins bind initially to DnaJ; upon interaction with the DnaJ-bound protein, DnaK hydrolyzes its bound ATP, resulting in the formation of a stable complex. GrpE releases ADP from DnaK; ATP binding to DnaK triggers the release of the substrate protein, thus completing the reaction cycle. Several rounds of ATP-dependent interactions between DnaJ, DnaK and GrpE are required for fully efficient folding. In Shewanella frigidimarina (strain NCIMB 400), this protein is Protein GrpE.